The sequence spans 146 residues: UPF0260 protein Sden_1632 (146 aa).

Belongs to the UPF0260 family.

The protein is UPF0260 protein Sden_1632 of Shewanella denitrificans (strain OS217 / ATCC BAA-1090 / DSM 15013).